A 535-amino-acid polypeptide reads, in one-letter code: CTP synthase (535 aa).

An amidoligase domain region spans residues 1-267; the sequence is MTKYIFVTGG…DQIVCDHLKL (267 aa). Residue Ser-13 coordinates CTP. Ser-13 is a UTP binding site. 14–19 is an ATP binding site; the sequence is SLGKGI. Tyr-54 lines the L-glutamine pocket. An ATP-binding site is contributed by Asp-71. Positions 71 and 141 each coordinate Mg(2+). Residues 148–150, 188–193, and Lys-224 contribute to the CTP site; these read DIE and KTKPTQ. Residues 188 to 193 and Lys-224 each bind UTP; that span reads KTKPTQ. 240–242 contributes to the ATP binding site; it reads RDA. Positions 292–534 constitute a Glutamine amidotransferase type-1 domain; that stretch reads KIALVGKYVE…VRASITNKES (243 aa). An L-glutamine-binding site is contributed by Gly-354. The Nucleophile; for glutamine hydrolysis role is filled by Cys-381. L-glutamine is bound by residues 382–385, Glu-405, and Arg-462; that span reads LGMQ. Active-site residues include His-507 and Glu-509.

It belongs to the CTP synthase family. In terms of assembly, homotetramer.

It catalyses the reaction UTP + L-glutamine + ATP + H2O = CTP + L-glutamate + ADP + phosphate + 2 H(+). It carries out the reaction L-glutamine + H2O = L-glutamate + NH4(+). The enzyme catalyses UTP + NH4(+) + ATP = CTP + ADP + phosphate + 2 H(+). The protein operates within pyrimidine metabolism; CTP biosynthesis via de novo pathway; CTP from UDP: step 2/2. With respect to regulation, allosterically activated by GTP, when glutamine is the substrate; GTP has no effect on the reaction when ammonia is the substrate. The allosteric effector GTP functions by stabilizing the protein conformation that binds the tetrahedral intermediate(s) formed during glutamine hydrolysis. Inhibited by the product CTP, via allosteric rather than competitive inhibition. Its function is as follows. Catalyzes the ATP-dependent amination of UTP to CTP with either L-glutamine or ammonia as the source of nitrogen. Regulates intracellular CTP levels through interactions with the four ribonucleotide triphosphates. The chain is CTP synthase from Bacillus cereus (strain ATCC 10987 / NRS 248).